Here is a 149-residue protein sequence, read N- to C-terminus: D-aminoacyl-tRNA deacylase (149 aa).

Residues 137-138 (GP) carry the Gly-cisPro motif, important for rejection of L-amino acids motif.

Belongs to the DTD family. As to quaternary structure, homodimer.

It is found in the cytoplasm. The catalysed reaction is glycyl-tRNA(Ala) + H2O = tRNA(Ala) + glycine + H(+). It catalyses the reaction a D-aminoacyl-tRNA + H2O = a tRNA + a D-alpha-amino acid + H(+). Functionally, an aminoacyl-tRNA editing enzyme that deacylates mischarged D-aminoacyl-tRNAs. Also deacylates mischarged glycyl-tRNA(Ala), protecting cells against glycine mischarging by AlaRS. Acts via tRNA-based rather than protein-based catalysis; rejects L-amino acids rather than detecting D-amino acids in the active site. By recycling D-aminoacyl-tRNA to D-amino acids and free tRNA molecules, this enzyme counteracts the toxicity associated with the formation of D-aminoacyl-tRNA entities in vivo and helps enforce protein L-homochirality. This Janthinobacterium sp. (strain Marseille) (Minibacterium massiliensis) protein is D-aminoacyl-tRNA deacylase.